Reading from the N-terminus, the 508-residue chain is Cytochrome P450 monooxygenase aflV (508 aa).

A helical membrane pass occupies residues 18-38 (LTWWFLAVGGAWIVSKIIKIL). N-linked (GlcNAc...) asparagine glycosylation is found at asparagine 192, asparagine 209, asparagine 302, and asparagine 408. A heme-binding site is contributed by cysteine 453.

The protein belongs to the cytochrome P450 family. The cofactor is heme.

The protein localises to the membrane. Its pathway is mycotoxin biosynthesis; aflatoxin biosynthesis. Its function is as follows. Cytochrome P450 monooxygenase; part of the gene cluster that mediates the biosynthesis of aflatoxins, a group of polyketide-derived furanocoumarins, and part of the most toxic and carcinogenic compounds among the known mycotoxins. The four major aflatoxins produced by A.parasiticus are aflatoxin B1 (AFB1), aflatoxin B2 (AFB2), aflatoxin G1 (AFG1) and aflatoxin G2 (AFG2). The role of the cytochrome P450 monooxygenase aflV in aflatoxin biosynthesis has still to be characterized. The biosynthesis of aflatoxins begins with the norsolorinic acid synthase aflC that combines a hexanoyl starter unit produced by the fatty acid synthase aflA/aflB and 7 malonyl-CoA extender units to synthesize the precursor NOR. The second step is the conversion of NOR to averantin and requires the norsolorinic acid ketoreductase aflD, which catalyzes the dehydration of norsolorinic acid to form (1'S)-averantin. The norsolorinic acid reductases aflE and aflF may also play a role in the conversion of NOR to AVN. The cytochrome P450 monooxygenase aflG then catalyzes the hydroxylation of AVN to 5'hydroxyaverantin (HAVN). The next step is performed by the 5'-hydroxyaverantin dehydrogenase aflH that transforms HAVN to 5'-oxoaverantin (OAVN) which is further converted to averufin (AVF) by aflK that plays a dual role in the pathway, as a 5'-oxoaverantin cyclase that mediates conversion of 5'-oxoaverantin, as well as a versicolorin B synthase in a later step in the pathway. The averufin oxidase aflI catalyzes the conversion of AVF to versiconal hemiacetal acetate (VHA). VHA is then the substrate for the versiconal hemiacetal acetate esterase aflJ to yield versiconal (VAL). Versicolorin B synthase aflK then converts VAL to versicolorin B (VERB) by closing the bisfuran ring of aflatoxin which is required for DNA-binding, thus giving to aflatoxin its activity as a mutagen. Then, the activity of the versicolorin B desaturase aflL leads to versicolorin A (VERA). A branch point starts from VERB since it can also be converted to dihydrodemethylsterigmatocystin (DMDHST), probably also by aflL, VERA being a precursor for aflatoxins B1 and G1, and DMDHST for aflatoxins B2 and G2. Next, the versicolorin reductase aflM and the cytochrome P450 monooxygenase aflN are involved in conversion of VERA to demethylsterigmatocystin (DMST). AflX and aflY seem also involved in this step, through probable aflX-mediated epoxide ring-opening step following versicolorin A oxidation and aflY-mediated Baeyer-Villiger oxidation required for the formation of the xanthone ring. The methyltransferase aflO then leads to the modification of DMST to sterigmatocystin (ST), and of DMDHST to dihydrosterigmatocystin (DHST). Both ST and DHST are then substrates of the O-methyltransferase aflP to yield O-methylsterigmatocystin (OMST) and dihydro-O-methylsterigmatocystin (DHOMST), respectively. Finally OMST is converted to aflatoxins B1 and G1, and DHOMST to aflatoxins B2 and G2, via the action of several enzymes including O-methylsterigmatocystin oxidoreductase aflQ, the cytochrome P450 monooxygenase aflU, but also the NADH-dependent flavin oxidoreductase nadA which is specifically required for the synthesis of AFG1. The polypeptide is Cytochrome P450 monooxygenase aflV (Aspergillus parasiticus (strain ATCC 56775 / NRRL 5862 / SRRC 143 / SU-1)).